The primary structure comprises 282 residues: Pantothenate synthetase (282 aa).

30–37 (MGALHAGH) is an ATP binding site. His-37 serves as the catalytic Proton donor. Gln-61 is a (R)-pantoate binding site. Residue Gln-61 participates in beta-alanine binding. 147–150 (GEKD) lines the ATP pocket. A (R)-pantoate-binding site is contributed by Gln-153. ATP-binding positions include Val-177 and 185 to 188 (LSSR).

It belongs to the pantothenate synthetase family. As to quaternary structure, homodimer.

Its subcellular location is the cytoplasm. It carries out the reaction (R)-pantoate + beta-alanine + ATP = (R)-pantothenate + AMP + diphosphate + H(+). It participates in cofactor biosynthesis; (R)-pantothenate biosynthesis; (R)-pantothenate from (R)-pantoate and beta-alanine: step 1/1. Functionally, catalyzes the condensation of pantoate with beta-alanine in an ATP-dependent reaction via a pantoyl-adenylate intermediate. The chain is Pantothenate synthetase from Phocaeicola vulgatus (strain ATCC 8482 / DSM 1447 / JCM 5826 / CCUG 4940 / NBRC 14291 / NCTC 11154) (Bacteroides vulgatus).